The sequence spans 273 residues: Nitrogenase iron protein 4 (273 aa).

Residue 8–15 coordinates ATP; it reads GKGGIGKS. Cys-94 serves as a coordination point for [4Fe-4S] cluster. The residue at position 97 (Arg-97) is an ADP-ribosylarginine; by dinitrogenase reductase ADP-ribosyltransferase. Cys-129 is a binding site for [4Fe-4S] cluster.

The protein belongs to the NifH/BchL/ChlL family. In terms of assembly, homodimer. The cofactor is [4Fe-4S] cluster. The reversible ADP-ribosylation of Arg-97 inactivates the nitrogenase reductase and regulates nitrogenase activity.

It carries out the reaction N2 + 8 reduced [2Fe-2S]-[ferredoxin] + 16 ATP + 16 H2O = H2 + 8 oxidized [2Fe-2S]-[ferredoxin] + 2 NH4(+) + 16 ADP + 16 phosphate + 6 H(+). Functionally, the key enzymatic reactions in nitrogen fixation are catalyzed by the nitrogenase complex, which has 2 components: the iron protein and the molybdenum-iron protein. The polypeptide is Nitrogenase iron protein 4 (nifH4) (Clostridium pasteurianum).